Here is a 211-residue protein sequence, read N- to C-terminus: Endonuclease V (211 aa).

Mg(2+) contacts are provided by Asp37 and Asp102.

It belongs to the endonuclease V family. Mg(2+) is required as a cofactor.

It localises to the cytoplasm. It carries out the reaction Endonucleolytic cleavage at apurinic or apyrimidinic sites to products with a 5'-phosphate.. Functionally, DNA repair enzyme involved in the repair of deaminated bases. Selectively cleaves double-stranded DNA at the second phosphodiester bond 3' to a deoxyinosine leaving behind the intact lesion on the nicked DNA. This is Endonuclease V from Ignicoccus hospitalis (strain KIN4/I / DSM 18386 / JCM 14125).